Consider the following 194-residue polypeptide: Imidazoleglycerol-phosphate dehydratase (194 aa).

It belongs to the imidazoleglycerol-phosphate dehydratase family.

The protein localises to the cytoplasm. The catalysed reaction is D-erythro-1-(imidazol-4-yl)glycerol 3-phosphate = 3-(imidazol-4-yl)-2-oxopropyl phosphate + H2O. It participates in amino-acid biosynthesis; L-histidine biosynthesis; L-histidine from 5-phospho-alpha-D-ribose 1-diphosphate: step 6/9. In Clostridium kluyveri (strain NBRC 12016), this protein is Imidazoleglycerol-phosphate dehydratase.